Reading from the N-terminus, the 549-residue chain is DDB1- and CUL4-associated factor 11 (549 aa).

Residues 1–24 (MGSRNSSSAGSGSLEPSEGLSRRG) are compositionally biased toward low complexity. A disordered region spans residues 1–40 (MGSRNSSSAGSGSLEPSEGLSRRGAGLRRSEEEEEEDEDV). Residues Ser73 and Ser75 each carry the phosphoserine modification. The span at 80-89 (DSAWDGRLGD) shows a compositional bias: basic and acidic residues. The segment at 80-100 (DSAWDGRLGDRYNPPVDATPD) is disordered. 7 WD repeats span residues 170 to 210 (TYSQ…HKFK), 216 to 258 (DVGW…TALD), 263 to 302 (ERRF…RTLQ), 305 to 345 (SHED…EDDP), 353 to 392 (GHQD…SREG), 435 to 480 (GVLH…KKLT), and 481 to 520 (NHKA…YFQD).

Interacts with DDB1 and CUL4A.

It participates in protein modification; protein ubiquitination. In terms of biological role, may function as a substrate receptor for CUL4-DDB1 E3 ubiquitin-protein ligase complex. The chain is DDB1- and CUL4-associated factor 11 (Dcaf11) from Rattus norvegicus (Rat).